We begin with the raw amino-acid sequence, 110 residues long: Serum amyloid A protein (110 aa).

The interval 73–110 is disordered; that stretch reads GGSGRGAEDSRADQAANEWGRSGKDPNHFRPHGLPDKY. Residues 93–110 are compositionally biased toward basic and acidic residues; it reads RSGKDPNHFRPHGLPDKY.

It belongs to the SAA family. This protein is the precursor of amyloid protein A, which is formed by the removal of residues from the C-terminal end. In terms of tissue distribution, expressed by the liver; secreted in plasma.

In terms of biological role, major acute phase reactant. Apolipoprotein of the HDL complex. This chain is Serum amyloid A protein (SAA1), found in Equus caballus (Horse).